The primary structure comprises 289 residues: MYG1 protein TC_0665 (289 aa).

It belongs to the MYG1 family.

This is MYG1 protein TC_0665 from Chlamydia muridarum (strain MoPn / Nigg).